A 469-amino-acid chain; its full sequence is Glutamine synthetase (469 aa).

The 86-residue stretch at 14–99 (NDVKFVDLRF…VCDILDPVSG (86 aa)) folds into the GS beta-grasp domain. In terms of domain architecture, GS catalytic spans 106 to 469 (RRGTAKKAEA…PVEYDMYYSA (364 aa)). The Mg(2+) site is built by Glu-131 and Glu-133. Glu-209 is a binding site for ATP. Positions 214 and 221 each coordinate Mg(2+). Residues 265–266 (NG) and Gly-266 each bind L-glutamate. His-270 provides a ligand contact to Mg(2+). Residues 272–274 (HQS) and Ser-274 contribute to the ATP site. Residues Arg-322, Glu-328, and Arg-340 each contribute to the L-glutamate site. The ATP site is built by Arg-340, Arg-345, and Lys-353. Glu-358 lines the Mg(2+) pocket. Arg-360 contacts L-glutamate. An O-AMP-tyrosine modification is found at Tyr-398.

The protein belongs to the glutamine synthetase family. Oligomer of 12 subunits arranged in the form of two hexameric ring. It depends on Mg(2+) as a cofactor.

The protein resides in the cytoplasm. It carries out the reaction L-glutamate + NH4(+) + ATP = L-glutamine + ADP + phosphate + H(+). The activity of this enzyme could be controlled by adenylation under conditions of abundant glutamine. Its function is as follows. Catalyzes the ATP-dependent biosynthesis of glutamine from glutamate and ammonia. The chain is Glutamine synthetase from Rhizobium leguminosarum bv. viciae.